Reading from the N-terminus, the 1048-residue chain is Ceruloplasmin (1048 aa).

Positions 1–19 (MKIFLLCIFLILCGTSVWA) are cleaved as a signal peptide. Plastocyanin-like domains follow at residues 20-200 (KDKH…LIHC), 209-357 (KEKN…VQDC), and 370-554 (NVRH…MKIC). Positions 55, 64, and 67 each coordinate Na(+). Cu(2+) is bound by residues His-120 and His-122. His-120 contacts O2. Lys-128 is a Ca(2+) binding site. Residue Asn-138 is glycosylated (N-linked (GlcNAc...) asparagine). Ca(2+) contacts are provided by Gln-143, Asp-146, and Asp-147. The cysteines at positions 174 and 200 are disulfide-linked. Cu(2+)-binding residues include His-180 and His-182. His-180 is an O2 binding site. Asn-227 carries N-linked (GlcNAc...) asparagine glycosylation. Ser-256 lines the Na(+) pocket. An intrachain disulfide couples Cys-276 to Cys-357. Cu(2+) is bound by residues His-295, Cys-338, and His-343. Na(+) is bound by residues Phe-408, Gly-417, and Tyr-420. Cys-530 and Cys-554 are disulfide-bonded. 2 N-linked (GlcNAc...) asparagine glycosylation sites follow: Asn-556 and Asn-582. The region spanning 564–712 (RLKNVDKEFY…MKQKYTVSQC (149 aa)) is the Plastocyanin-like 4 domain. Residue Ser-611 coordinates Na(+). An intrachain disulfide couples Cys-631 to Cys-712. Cu(2+) is bound by residues His-650, Cys-693, His-698, and Met-703. Cys-693 serves as the catalytic Nucleophile; for glutathione peroxidase activity. Ser-716 is modified (phosphoserine). Plastocyanin-like domains follow at residues 724 to 894 (GERT…LIVC) and 902 to 1044 (SNPI…PNEE). Residue Asn-756 is glycosylated (N-linked (GlcNAc...) asparagine). Residues Phe-761, Gly-770, and Tyr-773 each coordinate Na(+). Cys-868 and Cys-894 are oxidised to a cystine. Asn-920 carries N-linked (GlcNAc...) asparagine glycosylation. Ser-949 is a Na(+) binding site. Cu(2+) contacts are provided by His-977, His-980, His-982, His-1022, Cys-1023, His-1024, His-1028, and Met-1033. O2-binding residues include His-980 and His-982. His-1024 contacts O2.

The protein belongs to the multicopper oxidase family. Found in a complex with MPO and LTF; interacts directly with MPO and LTF, which allows Fe(3+) incorporation into LTF, activation of CP ferroxidase activity and protection of CP antioxidant properties by MPO. Requires Cu(2+) as cofactor. In terms of tissue distribution, expressed by the liver and secreted in plasma. Also expressed in the hypothalamus, spleen and uterus. No expression in the cortex, heart, intestine or kidney.

It localises to the secreted. The enzyme catalyses 4 Fe(2+) + O2 + 4 H(+) = 4 Fe(3+) + 2 H2O. The catalysed reaction is 4 Cu(+) + O2 + 4 H(+) = 4 Cu(2+) + 2 H2O. It catalyses the reaction a hydroperoxide + 2 glutathione = an alcohol + glutathione disulfide + H2O. It carries out the reaction 4 nitric oxide + O2 + 2 H2O = 4 nitrite + 4 H(+). The enzyme catalyses 2 glutathione + H2O2 = glutathione disulfide + 2 H2O. In terms of biological role, multifunctional blue, copper-binding (6-7 atoms per molecule) glycoprotein. It has ferroxidase activity oxidizing Fe(2+) to Fe(3+) without releasing radical oxygen species. It is involved in iron transport across the cell membrane. Copper ions provide a large number of enzymatic activites. Oxidizes highly toxic ferrous ions to the ferric state for further incorporation onto apo-transferrins, catalyzes Cu(+) oxidation and promotes the oxidation of biogenic amines such as norepinephrin and serotonin. Provides Cu(2+) ions for the ascorbate-mediated deaminase degradation of the heparan sulfate chains of GPC1. Has glutathione peroxidase-like activity, can remove both hydrogen peroxide and lipid hydroperoxide in the presence of thiols. Also shows NO-oxidase and NO2 synthase activities that determine endocrine NO homeostasis. The protein is Ceruloplasmin (CP) of Ovis aries (Sheep).